A 203-amino-acid polypeptide reads, in one-letter code: Proteasome subunit beta 2 (203 aa).

Residues Met-1–Ala-9 constitute a propeptide, removed in mature form; by autocatalysis. Thr-10 (nucleophile) is an active-site residue.

Belongs to the peptidase T1B family. As to quaternary structure, the 20S proteasome core is composed of 14 alpha and 14 beta subunits that assemble into four stacked heptameric rings, resulting in a barrel-shaped structure. The two inner rings, each composed of seven catalytic beta subunits, are sandwiched by two outer rings, each composed of seven alpha subunits. The catalytic chamber with the active sites is on the inside of the barrel. Has a gated structure, the ends of the cylinder being occluded by the N-termini of the alpha-subunits. Is capped at one or both ends by the proteasome regulatory ATPase, PAN.

It localises to the cytoplasm. The enzyme catalyses Cleavage of peptide bonds with very broad specificity.. The formation of the proteasomal ATPase PAN-20S proteasome complex, via the docking of the C-termini of PAN into the intersubunit pockets in the alpha-rings, triggers opening of the gate for substrate entry. Interconversion between the open-gate and close-gate conformations leads to a dynamic regulation of the 20S proteasome proteolysis activity. Component of the proteasome core, a large protease complex with broad specificity involved in protein degradation. This chain is Proteasome subunit beta 2, found in Pyrobaculum calidifontis (strain DSM 21063 / JCM 11548 / VA1).